Reading from the N-terminus, the 707-residue chain is Acyl-CoA ligase 891, peroxisomal (707 aa).

259 to 270 (INYTSGTTGPPK) contributes to the ATP binding site. Residues 525–549 (DGWFRTGDVCTVDAQGRFIIIDRRK) are fatty acid-binding. The Peroxisome targeting signal motif lies at 705–707 (AKL).

The protein belongs to the ATP-dependent AMP-binding enzyme family.

The protein resides in the peroxisome matrix. The catalysed reaction is (4E,8E)-10-(4-hydroxy-6-methoxy-7-methyl-3-oxo-1,3-dihydro-2-benzofuran-5-yl)-4,8-dimethyldeca-4,8-dienoate + ATP + CoA = (4E,8E)-10-(4-hydroxy-6-methoxy-7-methyl-3-oxo-1,3-dihydro-2-benzofuran-5-yl)-4,8-dimethyldeca-4,8-dienoyl-CoA + AMP + diphosphate. It functions in the pathway secondary metabolite biosynthesis; terpenoid biosynthesis. Acyl-CoA ligase involved in the biosynthesis of mycophenolic acid (MPA), the first isolated antibiotic natural product in the world obtained from a culture of Penicillium brevicompactum in 1893. The peroxisomal acyl-CoA ligase 891 converts the intermediate MFDHMP-3C into MFDHMP-3C-CoA which impairs its diffusion from the peroxisome. The first step of the pathway is the synthesis of 5-methylorsellinic acid (5MOA) by the cytosolic polyketide synthase mpaC. 5MOA is then converted to the phthalide compound 5,7-dihydroxy-4,6-dimethylphthalide (DHMP) by the endoplasmic reticulum-bound cytochrome P450 monooxygenase mpaDE. MpaDE first catalyzes hydroxylation of 5-MOA to 4,6-dihydroxy-2-(hydroxymethyl)-3-methylbenzoic acid (DHMB). MpaDE then acts as a lactone synthase that catalyzes the ring closure to convert DHMB into DHMP. The next step is the prenylation of DHMP by the Golgi apparatus-associated prenyltransferase mpaA to yield farnesyl-DHMP (FDHMP). The ER-bound oxygenase mpaB then mediates the oxidative cleavage the C19-C20 double bond in FDHMP to yield FDHMP-3C via a mycophenolic aldehyde intermediate. The O-methyltransferase mpaG catalyzes the methylation of FDHMP-3C to yield MFDHMP-3C. After the cytosolic methylation of FDHMP-3C, MFDHMP-3C enters into peroxisomes probably via free diffusion due to its low molecular weight. Upon a peroxisomal CoA ligation reaction, catalyzed by a beta-oxidation component enzyme acyl-CoA ligase ACL891, MFDHMP-3C-CoA would then be restricted to peroxisomes for the following beta-oxidation pathway steps. The peroxisomal beta-oxidation machinery than converts MFDHMP-3C-CoA into MPA_CoA, via a beta-oxidation chain-shortening process. Finally mpaH acts as a peroxisomal acyl-CoA hydrolase with high substrate specificity toward MPA-CoA to release the final product MPA. This is Acyl-CoA ligase 891, peroxisomal from Penicillium brevicompactum.